A 107-amino-acid chain; its full sequence is Integration host factor subunit beta (107 aa).

Residues 87 to 107 are disordered; sequence RERVNNGTRKNGGSADAASGG.

Belongs to the bacterial histone-like protein family. Heterodimer of an alpha and a beta chain.

In terms of biological role, this protein is one of the two subunits of integration host factor, a specific DNA-binding protein that functions in genetic recombination as well as in transcriptional and translational control. This is Integration host factor subunit beta from Granulibacter bethesdensis (strain ATCC BAA-1260 / CGDNIH1).